A 92-amino-acid polypeptide reads, in one-letter code: Small ribosomal subunit protein uS19c (92 aa).

The protein belongs to the universal ribosomal protein uS19 family.

It localises to the plastid. It is found in the chloroplast. Its function is as follows. Protein S19 forms a complex with S13 that binds strongly to the 16S ribosomal RNA. This Tupiella akineta (Green alga) protein is Small ribosomal subunit protein uS19c.